Here is a 434-residue protein sequence, read N- to C-terminus: Exopolygalacturonase X-1 (434 aa).

The first 22 residues, 1–22 (MKLSHLLTSAVSVLSLGLTVEG), serve as a signal peptide directing secretion. N-linked (GlcNAc...) asparagine glycosylation is found at Asn-113, Asn-129, and Asn-199. Residues 231-252 (SKNIVIQNSVINNGDDCVSFKP) form a PbH1 1 repeat. Residue Asp-245 is the Proton donor of the active site. A disulfide bridge connects residues Cys-247 and Cys-264. Asn-253 and Asn-265 each carry an N-linked (GlcNAc...) asparagine glycan. The PbH1 2 repeat unit spans residues 254–274 (STEILVQNLYCNGSHGISVGS). Residue His-268 is part of the active site. Residues Asn-292, Asn-297, Asn-329, Asn-354, and Asn-364 are each glycosylated (N-linked (GlcNAc...) asparagine). One copy of the PbH1 3 repeat lies at 327–348 (VSNITYEDMYIENVDWAIEITQ). A PbH1 4 repeat occupies 362 to 405 (PSNLTISDVYISNMYGTTSSARDPNIGTIVCSSPDVCSNIYVEN). An intrachain disulfide couples Cys-392 to Cys-398. N-linked (GlcNAc...) asparagine glycosylation is found at Asn-423 and Asn-430.

This sequence belongs to the glycosyl hydrolase 28 family.

The protein resides in the secreted. The catalysed reaction is [(1-&gt;4)-alpha-D-galacturonosyl](n) + H2O = alpha-D-galacturonate + [(1-&gt;4)-alpha-D-galacturonosyl](n-1). Its function is as follows. Specific in hydrolyzing the terminal glycosidic bond of polygalacturonic acid and oligogalacturonates. This is Exopolygalacturonase X-1 (pgaX-1) from Emericella nidulans (strain FGSC A4 / ATCC 38163 / CBS 112.46 / NRRL 194 / M139) (Aspergillus nidulans).